A 238-amino-acid chain; its full sequence is tRNA (guanine-N(1)-)-methyltransferase (238 aa).

Residues Gly108 and Leu127–Leu132 each bind S-adenosyl-L-methionine.

The protein belongs to the RNA methyltransferase TrmD family. As to quaternary structure, homodimer.

Its subcellular location is the cytoplasm. The enzyme catalyses guanosine(37) in tRNA + S-adenosyl-L-methionine = N(1)-methylguanosine(37) in tRNA + S-adenosyl-L-homocysteine + H(+). Its function is as follows. Specifically methylates guanosine-37 in various tRNAs. This Streptococcus uberis (strain ATCC BAA-854 / 0140J) protein is tRNA (guanine-N(1)-)-methyltransferase.